We begin with the raw amino-acid sequence, 120 residues long: Large ribosomal subunit protein bL19c (120 aa).

The protein belongs to the bacterial ribosomal protein bL19 family.

It localises to the plastid. The protein localises to the chloroplast. The polypeptide is Large ribosomal subunit protein bL19c (rpl19) (Trieres chinensis (Marine centric diatom)).